Reading from the N-terminus, the 269-residue chain is Pyrroline-5-carboxylate reductase (269 aa).

It belongs to the pyrroline-5-carboxylate reductase family.

The protein resides in the cytoplasm. The catalysed reaction is L-proline + NADP(+) = (S)-1-pyrroline-5-carboxylate + NADPH + 2 H(+). The enzyme catalyses L-proline + NAD(+) = (S)-1-pyrroline-5-carboxylate + NADH + 2 H(+). It functions in the pathway amino-acid biosynthesis; L-proline biosynthesis; L-proline from L-glutamate 5-semialdehyde: step 1/1. Its activity is regulated as follows. Inhibited by p-chloromercuribenzoate. In terms of biological role, catalyzes the reduction of 1-pyrroline-5-carboxylate (PCA) to L-proline. Does not catalyze the reverse reaction. This chain is Pyrroline-5-carboxylate reductase, found in Escherichia coli (strain K12).